A 129-amino-acid polypeptide reads, in one-letter code: Trefoil factor 2 (129 aa).

Residues 1–23 (MGPRGAPLLVVVLVLGLHALAEG) form the signal peptide. P-type domains lie at 29-73 (CRCS…FHPL) and 79-122 (EQCV…FFPQ). Cystine bridges form between cysteine 29-cysteine 127, cysteine 31-cysteine 58, cysteine 42-cysteine 57, cysteine 52-cysteine 69, cysteine 81-cysteine 107, cysteine 91-cysteine 106, and cysteine 101-cysteine 118.

Expressed in the digestive tract, where it was found predominantly in the stomach with highest expression in the antrum. It is secreted predominantly from antral mucous cells into the lumen of the gastrointestinal tract.

It localises to the secreted. Inhibits gastrointestinal motility and gastric acid secretion. Could function as a structural component of gastric mucus, possibly by stabilizing glycoproteins in the mucus gel through interactions with carbohydrate side chains. This is Trefoil factor 2 (Tff2) from Rattus norvegicus (Rat).